A 795-amino-acid chain; its full sequence is RalBP1-associated Eps domain-containing protein 1 (795 aa).

One can recognise an EH 1 domain in the interval Glu-10–Ala-113. The interval Leu-112 to Pro-238 is disordered. Residues Ser-115 to Tyr-126 are compositionally biased toward polar residues. Phosphoserine is present on residues Ser-145, Ser-162, Ser-166, and Ser-170. Residues Glu-156–Gln-168 show a composition bias toward low complexity. Position 173 is a phosphothreonine (Thr-173). Positions Gly-205–Ala-216 are enriched in low complexity. 2 positions are modified to phosphoserine: Ser-272 and Ser-273. In terms of domain architecture, EH 2 spans Gln-285–Leu-374. Position 288 is a phosphotyrosine (Tyr-288). Ser-307 is subject to Phosphoserine. Residues Leu-318–Arg-353 form the EF-hand domain. 4 residues coordinate Ca(2+): Asp-331, Asp-333, Asp-335, and Glu-342. Disordered regions lie at residues Val-380–Thr-433 and Glu-469–Thr-720. Polar residues predominate over residues Leu-407 to Thr-433. Ser-475, Ser-482, and Ser-489 each carry phosphoserine. Composition is skewed to polar residues over residues Ile-497–Phe-518 and Ile-525–Asn-542. Ser-539 is modified (phosphoserine). Thr-543 carries the phosphothreonine modification. The span at Thr-543 to Gln-553 shows a compositional bias: pro residues. Residue Ser-561 is modified to Phosphoserine. A compositionally biased stretch (polar residues) spans Leu-562–Gly-573. The segment covering Gln-574 to Pro-583 has biased composition (low complexity). The segment covering Pro-584–Ala-595 has biased composition (pro residues). 2 stretches are compositionally biased toward polar residues: residues Thr-611–Glu-622 and Ala-681–Thr-692. Residues His-651–Leu-795 are interaction with RALBP1. Positions Lys-707–Thr-720 are enriched in basic and acidic residues. 2 positions are modified to phosphoserine: Ser-708 and Ser-739. Residues Ser-750–Arg-790 adopt a coiled-coil conformation.

Homodimer (Potential). Interacts with RALBP1, CRK and GRB2. Binding to RALBP1 does not affect its Ral-binding activity. Forms a complex with the SH3 domains of CRK and GRB2 which may link it to an EGF-responsive tyrosine kinase. Interacts with RAB11FIP2. Interacts with AMPH, ITSN1 (via SH3 domains) and SGIP1; may be involved in clathrin-mediated endocytosis. In terms of processing, EGF stimulates phosphorylation on Tyr-residues. In terms of tissue distribution, expressed in all tissues examined. The highest level expression was found in the kidney and testis.

The protein resides in the membrane. It localises to the clathrin-coated pit. In terms of biological role, may coordinate the cellular actions of activated EGF receptors and Ral-GTPases. In Mus musculus (Mouse), this protein is RalBP1-associated Eps domain-containing protein 1 (Reps1).